We begin with the raw amino-acid sequence, 819 residues long: Ion-translocating oxidoreductase complex subunit C (819 aa).

2 consecutive 4Fe-4S ferredoxin-type domains span residues 368-398 and 408-437; these read EYAE…QQLY and KSEE…IQYF. 8 residues coordinate [4Fe-4S] cluster: C378, C381, C384, C388, C417, C420, C423, and C427. Basic and acidic residues-rich tracts occupy residues 465–477 and 485–513; these read QARM…ERKA and ARRE…KANE. Disordered stretches follow at residues 465 to 568, 580 to 677, and 692 to 793; these read QARM…NAKK, AKKL…TALD, and AKKL…PKKA. Polar residues-rich tracts occupy residues 554–565 and 587–601; these read VENQEQQTQPTN and NSTS…TAEN. The span at 602–614 shows a compositional bias: basic and acidic residues; sequence QVEKTKSAVEKTQ. A compositionally biased stretch (polar residues) spans 641–656; it reads QTNSTSEAISNSQTAE. Residues 658–671 show a composition bias toward basic and acidic residues; the sequence is EVEKTKSAVEKTEE. 2 stretches are compositionally biased toward polar residues: residues 699–712 and 755–768; these read NSAS…QTAE and NSTS…QTAE. The span at 770–782 shows a compositional bias: basic and acidic residues; the sequence is EVEKTKSAVEKTQ.

Belongs to the 4Fe4S bacterial-type ferredoxin family. RnfC subfamily. In terms of assembly, the complex is composed of six subunits: RnfA, RnfB, RnfC, RnfD, RnfE and RnfG. [4Fe-4S] cluster is required as a cofactor.

The protein localises to the cell inner membrane. In terms of biological role, part of a membrane-bound complex that couples electron transfer with translocation of ions across the membrane. The chain is Ion-translocating oxidoreductase complex subunit C from Haemophilus influenzae (strain ATCC 51907 / DSM 11121 / KW20 / Rd).